Reading from the N-terminus, the 588-residue chain is Aspartate--tRNA ligase (588 aa).

Glu-177 is a binding site for L-aspartate. Residues 201–204 form an aspartate region; that stretch reads QLFK. Position 223 (Arg-223) interacts with L-aspartate. Residues 223–225 and Gln-232 each bind ATP; that span reads RDE. His-451 is an L-aspartate binding site. Glu-485 contributes to the ATP binding site. Arg-492 lines the L-aspartate pocket. An ATP-binding site is contributed by 537-540; sequence GLDR.

The protein belongs to the class-II aminoacyl-tRNA synthetase family. Type 1 subfamily. As to quaternary structure, homodimer.

Its subcellular location is the cytoplasm. It catalyses the reaction tRNA(Asp) + L-aspartate + ATP = L-aspartyl-tRNA(Asp) + AMP + diphosphate. Catalyzes the attachment of L-aspartate to tRNA(Asp) in a two-step reaction: L-aspartate is first activated by ATP to form Asp-AMP and then transferred to the acceptor end of tRNA(Asp). This Staphylococcus aureus (strain Newman) protein is Aspartate--tRNA ligase.